An 84-amino-acid polypeptide reads, in one-letter code: DNA-directed RNA polymerase subunit Rpo5 (84 aa).

This sequence belongs to the archaeal Rpo5/eukaryotic RPB5 RNA polymerase subunit family. Part of the 13-subunit RNA polymerase.

The protein resides in the cytoplasm. It catalyses the reaction RNA(n) + a ribonucleoside 5'-triphosphate = RNA(n+1) + diphosphate. Its function is as follows. DNA-dependent RNA polymerase (RNAP) catalyzes the transcription of DNA into RNA using the four ribonucleoside triphosphates as substrates. In terms of biological role, reconstitution experiments show this subunit is required for basic activity. This is DNA-directed RNA polymerase subunit Rpo5 from Sulfolobus acidocaldarius (strain ATCC 33909 / DSM 639 / JCM 8929 / NBRC 15157 / NCIMB 11770).